Consider the following 111-residue polypeptide: Type III endosome membrane protein TEMP (111 aa).

At 1-27 (MIGGNTTIISGAINASTEAPGLGTGGR) the chain is on the extracellular side. Residue Asn5 is glycosylated (N-linked (GlcNAc...) asparagine). A helical; Signal-anchor for type III membrane protein transmembrane segment spans residues 28–48 (AWPVLVGVVLGAVVLSILIAL). Residues 49-111 (AAKCHLCRRY…TTGSRDHFSL (63 aa)) lie on the Cytoplasmic side of the membrane. Residues 64–111 (HRPLSSAGGGNRPPVGEDEDDDGFIEDNYIQPGAGEMETTGSRDHFSL) form a disordered region. Acidic residues predominate over residues 79-88 (GEDEDDDGFI).

As to expression, expressed in stomach, kidney, large and small intestine and kidney.

It localises to the membrane. The protein resides in the early endosome. Its subcellular location is the recycling endosome. It is found in the cell membrane. May be involved in membrane trafficking between endosomes and plasma membrane. The chain is Type III endosome membrane protein TEMP from Mus musculus (Mouse).